The sequence spans 279 residues: MEPIIELEKINYKYQPDDLRPALKDVSFTIDKGEWIAIIGHNGSGKSTLAKTINGLLLPESGIVKVGNQILDEENIWTIRQMVGMVFQNPDNQFVGSTVEDDVAFGLENQGIPREEMLVRVKDALEKVRMAEFASREPARLSGGQKQRVAIAGVVALRPDIIILDEATSMLDPEGREEVISTIKKIKEESQLTVISITHDIDEAANANRILVMRQGELVREGTPKEIFSAGPELIDLGLDLPFPEKLKSALKERGVDVPSEYMTEERMVDWLWTSVLNK.

The ABC transporter domain occupies 5–240 (IELEKINYKY…GPELIDLGLD (236 aa)). 40–47 (GHNGSGKS) lines the ATP pocket.

It belongs to the ABC transporter superfamily. Energy-coupling factor EcfA family. As to quaternary structure, forms a stable energy-coupling factor (ECF) transporter complex composed of 2 membrane-embedded substrate-binding proteins (S component), 2 ATP-binding proteins (A component) and 2 transmembrane proteins (T component).

The protein localises to the cell membrane. In terms of biological role, ATP-binding (A) component of a common energy-coupling factor (ECF) ABC-transporter complex. Unlike classic ABC transporters this ECF transporter provides the energy necessary to transport a number of different substrates. This is Energy-coupling factor transporter ATP-binding protein EcfA from Enterococcus faecium (Streptococcus faecium).